We begin with the raw amino-acid sequence, 351 residues long: Uroporphyrinogen decarboxylase (351 aa).

Substrate-binding positions include Arg-27–Arg-31, Asp-77, Tyr-154, Thr-209, and His-327.

The protein belongs to the uroporphyrinogen decarboxylase family. Homodimer.

The protein resides in the cytoplasm. The enzyme catalyses uroporphyrinogen III + 4 H(+) = coproporphyrinogen III + 4 CO2. Its pathway is porphyrin-containing compound metabolism; protoporphyrin-IX biosynthesis; coproporphyrinogen-III from 5-aminolevulinate: step 4/4. Functionally, catalyzes the decarboxylation of four acetate groups of uroporphyrinogen-III to yield coproporphyrinogen-III. The protein is Uroporphyrinogen decarboxylase of Thioalkalivibrio sulfidiphilus (strain HL-EbGR7).